Reading from the N-terminus, the 477-residue chain is Argininosuccinate synthase (477 aa).

Residues 17-25 and Ala-43 each bind ATP; that span reads AFSGGLDTS. Residue Tyr-99 participates in L-citrulline binding. ATP is bound by residues Gly-129 and Thr-131. Positions 131, 135, and 136 each coordinate L-aspartate. An L-citrulline-binding site is contributed by Asn-135. Asp-136 serves as a coordination point for ATP. Positions 139 and 192 each coordinate L-citrulline. ATP is bound at residue Asp-194. 3 residues coordinate L-citrulline: Thr-201, Glu-203, and Glu-280. The interval 450-477 is disordered; that stretch reads DQITENPEVQAEPEEEALDAAAMEAGTD. A compositionally biased stretch (low complexity) spans 468–477; it reads DAAAMEAGTD.

This sequence belongs to the argininosuccinate synthase family. Type 2 subfamily. In terms of assembly, homotetramer.

The protein localises to the cytoplasm. It carries out the reaction L-citrulline + L-aspartate + ATP = 2-(N(omega)-L-arginino)succinate + AMP + diphosphate + H(+). It participates in amino-acid biosynthesis; L-arginine biosynthesis; L-arginine from L-ornithine and carbamoyl phosphate: step 2/3. The chain is Argininosuccinate synthase from Nocardioides sp. (strain ATCC BAA-499 / JS614).